A 215-amino-acid chain; its full sequence is Pyrrolidone-carboxylate peptidase (215 aa).

Catalysis depends on residues Glu-81, Cys-144, and His-168.

It belongs to the peptidase C15 family. Homotetramer.

The protein resides in the cytoplasm. It carries out the reaction Release of an N-terminal pyroglutamyl group from a polypeptide, the second amino acid generally not being Pro.. Removes 5-oxoproline from various penultimate amino acid residues except L-proline. The chain is Pyrrolidone-carboxylate peptidase from Bacillus velezensis (strain DSM 23117 / BGSC 10A6 / LMG 26770 / FZB42) (Bacillus amyloliquefaciens subsp. plantarum).